We begin with the raw amino-acid sequence, 265 residues long: Phosphatidylserine decarboxylase proenzyme (265 aa).

Serine 183 (schiff-base intermediate with substrate; via pyruvic acid) is an active-site residue. Pyruvic acid (Ser); by autocatalysis is present on serine 183. Residues 216–246 (TAPQTESEPESEPALQTAPVETAANPSAEQR) are disordered.

It belongs to the phosphatidylserine decarboxylase family. PSD-A subfamily. Heterodimer of a large membrane-associated beta subunit and a small pyruvoyl-containing alpha subunit. Pyruvate is required as a cofactor. In terms of processing, is synthesized initially as an inactive proenzyme. Formation of the active enzyme involves a self-maturation process in which the active site pyruvoyl group is generated from an internal serine residue via an autocatalytic post-translational modification. Two non-identical subunits are generated from the proenzyme in this reaction, and the pyruvate is formed at the N-terminus of the alpha chain, which is derived from the carboxyl end of the proenzyme. The post-translation cleavage follows an unusual pathway, termed non-hydrolytic serinolysis, in which the side chain hydroxyl group of the serine supplies its oxygen atom to form the C-terminus of the beta chain, while the remainder of the serine residue undergoes an oxidative deamination to produce ammonia and the pyruvoyl prosthetic group on the alpha chain.

It is found in the cell membrane. It carries out the reaction a 1,2-diacyl-sn-glycero-3-phospho-L-serine + H(+) = a 1,2-diacyl-sn-glycero-3-phosphoethanolamine + CO2. It functions in the pathway phospholipid metabolism; phosphatidylethanolamine biosynthesis; phosphatidylethanolamine from CDP-diacylglycerol: step 2/2. Its function is as follows. Catalyzes the formation of phosphatidylethanolamine (PtdEtn) from phosphatidylserine (PtdSer). In Neisseria meningitidis serogroup B (strain ATCC BAA-335 / MC58), this protein is Phosphatidylserine decarboxylase proenzyme.